Consider the following 294-residue polypeptide: UDP-3-O-acyl-N-acetylglucosamine deacetylase (294 aa).

The Zn(2+) site is built by His75, His232, and Asp236. The Proton donor role is filled by His259.

Belongs to the LpxC family. Zn(2+) is required as a cofactor.

The enzyme catalyses a UDP-3-O-[(3R)-3-hydroxyacyl]-N-acetyl-alpha-D-glucosamine + H2O = a UDP-3-O-[(3R)-3-hydroxyacyl]-alpha-D-glucosamine + acetate. It participates in glycolipid biosynthesis; lipid IV(A) biosynthesis; lipid IV(A) from (3R)-3-hydroxytetradecanoyl-[acyl-carrier-protein] and UDP-N-acetyl-alpha-D-glucosamine: step 2/6. Catalyzes the hydrolysis of UDP-3-O-myristoyl-N-acetylglucosamine to form UDP-3-O-myristoylglucosamine and acetate, the committed step in lipid A biosynthesis. This Campylobacter jejuni subsp. doylei (strain ATCC BAA-1458 / RM4099 / 269.97) protein is UDP-3-O-acyl-N-acetylglucosamine deacetylase.